Consider the following 329-residue polypeptide: L-arabinose-binding periplasmic protein (329 aa).

An N-terminal signal peptide occupies residues 1–23 (MHKFTKALAAIGLAAVMSQSAMA).

This sequence belongs to the bacterial solute-binding protein 2 family.

It localises to the periplasm. Functionally, involved in the high-affinity L-arabinose membrane transport system. Binds with high affinity to arabinose, but can also bind D-galactose (approximately 2-fold reduction) and D-fucose (approximately 40-fold reduction). The chain is L-arabinose-binding periplasmic protein (araF) from Escherichia coli (strain K12).